The chain runs to 286 residues: Enoyl-CoA hydratase ChsH3 (286 aa).

A MaoC-like domain is found at Ala-163–Thr-271. Residues Asp-189 and His-194 contribute to the active site.

It belongs to the enoyl-CoA hydratase/isomerase family. Homodimer.

It catalyses the reaction (22E)-3-oxochola-4,22-dien-24-oyl-CoA + H2O = (22S)-hydroxy-3-oxo-chol-4-ene-24-oyl-CoA. The protein operates within steroid metabolism; cholesterol degradation. In terms of biological role, degradation of the cholesterol side chain involves 3 multistep beta-oxidation cycles, this is involved in the second cycle. Hydrates bulky steroid enoyl-CoA esters, has highest activity with 3-OCDO-CoA (3-oxochol-4,22-dien-24-oyl-CoA) making (22S)-HOCO-CoA, followed by octenoyl-CoA, with weaker activity on 3-OCDS-CoA (3-oxocholest-4,24-dien-26-oyl-CoA) and none on 3-OPDC-CoA (3-oxo-pregna-4,17-diene-20- carboxyl-CoA). Hydrates the same substrate as EchA19, but the 2 enzymes make different stereoisomers of the product. This Mycobacterium tuberculosis (strain ATCC 25618 / H37Rv) protein is Enoyl-CoA hydratase ChsH3.